A 208-amino-acid polypeptide reads, in one-letter code: Putative speedy protein E7 (208 aa).

Belongs to the Speedy/Ringo family.

This Homo sapiens (Human) protein is Putative speedy protein E7 (SPDYE7P).